Consider the following 98-residue polypeptide: NADH-ubiquinone oxidoreductase chain 4L (98 aa).

A run of 3 helical transmembrane segments spans residues Met1 to Met21, Ala29 to Leu49, and Ile61 to Ile81.

This sequence belongs to the complex I subunit 4L family. Core subunit of respiratory chain NADH dehydrogenase (Complex I) which is composed of 45 different subunits.

The protein resides in the mitochondrion inner membrane. The catalysed reaction is a ubiquinone + NADH + 5 H(+)(in) = a ubiquinol + NAD(+) + 4 H(+)(out). Its function is as follows. Core subunit of the mitochondrial membrane respiratory chain NADH dehydrogenase (Complex I) which catalyzes electron transfer from NADH through the respiratory chain, using ubiquinone as an electron acceptor. Part of the enzyme membrane arm which is embedded in the lipid bilayer and involved in proton translocation. The sequence is that of NADH-ubiquinone oxidoreductase chain 4L (MT-ND4L) from Ziphius cavirostris (Cuvier's beaked whale).